The primary structure comprises 55 residues: Large ribosomal subunit protein bL33 (55 aa).

This sequence belongs to the bacterial ribosomal protein bL33 family.

The polypeptide is Large ribosomal subunit protein bL33 (Buchnera aphidicola subsp. Acyrthosiphon pisum (strain 5A)).